A 493-amino-acid chain; its full sequence is Cytoplasmic tRNA 2-thiolation protein 2 (493 aa).

Serine 489 bears the Phosphoserine mark.

It belongs to the CTU2/NCS2 family. As to quaternary structure, interacts with NCS6 and URM1. May act by forming a heterodimer with NCS6.

The protein localises to the cytoplasm. Its pathway is tRNA modification; 5-methoxycarbonylmethyl-2-thiouridine-tRNA biosynthesis. Its function is as follows. Plays a central role in 2-thiolation of mcm(5)S(2)U at tRNA wobble positions of tRNA(Lys), tRNA(Glu) and tRNA(Gln). May act by forming a heterodimer with NCS6 that ligates sulfur from thiocarboxylated URM1 onto the uridine of tRNAs at wobble position. Prior mcm(5) tRNA modification by the elongator complex is required for 2-thiolation. May also be involved in protein urmylation. The protein is Cytoplasmic tRNA 2-thiolation protein 2 of Saccharomyces cerevisiae (strain AWRI1631) (Baker's yeast).